The chain runs to 374 residues: MRDPAPSDTQKKRVIVGMSGGVDSSVSAVLLMEQGYEVEGLFMKNWEEDDGTEYCTAMDDLADAQAVCDKIGIKLHTANFAAEYWDNVFEHFLAEYKAGRTPNPDILCNREIKFKAFLDYAMMLGADLIATGHYVRRRDIDGRTELLKGLDPNKDQSYFLHAVGGEQIAKTLFPVGELEKPEVRKIAEKHGLATAKKKDSTGICFIGERRFSDFLKQYLPAQPGEIKTTDGEVIGRHHGLMYHTIGQRQGLGIGGLKDAGEEPWYVLVKDLDNNVLIVGQGNEHPLLFSGALLASEIYWVNPIDLSTPRRLTAKVRYRQGDQPCTLEKTATGYRATFDDPQRAVTPGQSVVFYDGEICLGGGVIEVAEAWSNPA.

Residues 17-24 (GMSGGVDS) and M43 contribute to the ATP site. Positions 103–105 (NPD) are interaction with target base in tRNA. Catalysis depends on C108, which acts as the Nucleophile. An intrachain disulfide couples C108 to C204. Position 132 (G132) interacts with ATP. The segment at 154–156 (KDQ) is interaction with tRNA. C204 serves as the catalytic Cysteine persulfide intermediate. The interaction with tRNA stretch occupies residues 316–317 (RY).

Belongs to the MnmA/TRMU family.

Its subcellular location is the cytoplasm. The catalysed reaction is S-sulfanyl-L-cysteinyl-[protein] + uridine(34) in tRNA + AH2 + ATP = 2-thiouridine(34) in tRNA + L-cysteinyl-[protein] + A + AMP + diphosphate + H(+). Catalyzes the 2-thiolation of uridine at the wobble position (U34) of tRNA, leading to the formation of s(2)U34. This is tRNA-specific 2-thiouridylase MnmA from Pseudomonas fluorescens (strain SBW25).